A 91-amino-acid polypeptide reads, in one-letter code: Protein SPATA45 homolog (91 aa).

The tract at residues 42-91 is disordered; sequence RADRKHDPNGFNSSVFKGASNQHQESSLDFATAEPEFHRERRHFPEKSEY. A compositionally biased stretch (polar residues) spans 51 to 70; it reads GFNSSVFKGASNQHQESSLD. Positions 76–91 are enriched in basic and acidic residues; the sequence is PEFHRERRHFPEKSEY.

It belongs to the SPATA45 family.

The protein is Protein SPATA45 homolog of Nematostella vectensis (Starlet sea anemone).